The primary structure comprises 502 residues: Lysine--tRNA ligase (502 aa).

2 residues coordinate Mg(2+): Glu-413 and Glu-420.

It belongs to the class-II aminoacyl-tRNA synthetase family. Homodimer. It depends on Mg(2+) as a cofactor.

The protein resides in the cytoplasm. The enzyme catalyses tRNA(Lys) + L-lysine + ATP = L-lysyl-tRNA(Lys) + AMP + diphosphate. This chain is Lysine--tRNA ligase, found in Haemophilus influenzae (strain PittEE).